We begin with the raw amino-acid sequence, 153 residues long: Large ribosomal subunit protein uL22 (153 aa).

Belongs to the universal ribosomal protein uL22 family. In terms of assembly, part of the 50S ribosomal subunit.

Its function is as follows. This protein binds specifically to 23S rRNA. It makes multiple contacts with different domains of the 23S rRNA in the assembled 50S subunit and ribosome. Functionally, the globular domain of the protein is located near the polypeptide exit tunnel on the outside of the subunit, while an extended beta-hairpin is found that lines the wall of the exit tunnel in the center of the 70S ribosome. The chain is Large ribosomal subunit protein uL22 from Methanococcus vannielii (strain ATCC 35089 / DSM 1224 / JCM 13029 / OCM 148 / SB).